We begin with the raw amino-acid sequence, 356 residues long: tRNA-specific 2-thiouridylase MnmA 1 (356 aa).

ATP is bound by residues 8–15 (GMSGGVDS) and M34. C103 acts as the Nucleophile in catalysis. C103 and C199 are oxidised to a cystine. Position 127 (G127) interacts with ATP. The segment at 149 to 151 (KDQ) is interaction with tRNA. C199 serves as the catalytic Cysteine persulfide intermediate. The interval 305–306 (RY) is interaction with tRNA.

It belongs to the MnmA/TRMU family.

Its subcellular location is the cytoplasm. The enzyme catalyses S-sulfanyl-L-cysteinyl-[protein] + uridine(34) in tRNA + AH2 + ATP = 2-thiouridine(34) in tRNA + L-cysteinyl-[protein] + A + AMP + diphosphate + H(+). Functionally, catalyzes the 2-thiolation of uridine at the wobble position (U34) of tRNA, leading to the formation of s(2)U34. This is tRNA-specific 2-thiouridylase MnmA 1 from Clostridium botulinum (strain Langeland / NCTC 10281 / Type F).